We begin with the raw amino-acid sequence, 62 residues long: MDVTVSKVDTKLLDLLVCPLTKGSLSYDREKNELVSEKARLAYPIRDGIPIMLISEARRIED.

The protein belongs to the UPF0434 family.

This chain is UPF0434 protein Arad_4458, found in Rhizobium rhizogenes (strain K84 / ATCC BAA-868) (Agrobacterium radiobacter).